Reading from the N-terminus, the 263-residue chain is Tryptophan synthase alpha chain (263 aa).

Catalysis depends on proton acceptor residues glutamate 49 and aspartate 60.

This sequence belongs to the TrpA family. Tetramer of two alpha and two beta chains.

The enzyme catalyses (1S,2R)-1-C-(indol-3-yl)glycerol 3-phosphate + L-serine = D-glyceraldehyde 3-phosphate + L-tryptophan + H2O. It functions in the pathway amino-acid biosynthesis; L-tryptophan biosynthesis; L-tryptophan from chorismate: step 5/5. In terms of biological role, the alpha subunit is responsible for the aldol cleavage of indoleglycerol phosphate to indole and glyceraldehyde 3-phosphate. The sequence is that of Tryptophan synthase alpha chain from Jannaschia sp. (strain CCS1).